Here is a 1232-residue protein sequence, read N- to C-terminus: MSVEATGKPLKVGSRVEVIGKGYRGTVAYVGATLFATGKWVGVILDDSKGKNDGTVQGRRYFTCEENHGIFVRQSQIQVIEDGADTTSPETPEPTASKGLKKDVMETPKSSKLPTRPSSSAASSGTASASCGEISSSEPSTPAQTPLAAPIIPSPSSAITSPVAPLPGPGPSKEEENLRAQVKDLEEKLETLKMKRAEDKAKLKEMEKSKLQLEQVQEWKSKMQEQQADIQRQLKEAKKEAKEALEAKERYMEEMADTADAIEMATLDKEMAEERAESLQQEVDTLKDKVEEHKIDLEILKHEIEEKGSDGAASSYQVKQLEEQNARLKEALVRMRDLSASEKQEHIKVQKQMEKKNTELDTLRQQKEKLQEEASHMEKTIDELKEQVDAALGAEEMVETLAERNLDLEEKVRELRETVSDLEAINEMNDELQENARETELELREQLDMAGARVREAEKRVEAAQETVADYQQTIKKYRDLTAHLQEVNSELRNQQEASVEKEQQPSPEMFDFKIKFAETKAHAKAIEMELRKMEVTQANRHVSLLTSFMPDSFLRHGGDHDCILVLLLIPRLICKAELISKQAQEKFELSEVGEQKSGMRGAVGEQMSFAAGLVYSLTLLQATLHKYEQALDKCSVEVYKKVGMLYPEMSVHERSLDFLIELLHKDQLDETVNVEPLTKAIKYYQHLYSIHLADQAEECTMQLSDHIKFTQSALDCMGVEVSRLRAFLHAGQESSDFAILLKDLETSCSDIRQFCKKIRRRMPGTEAAGIPAALGFGQQVCETLLDCRKYLKCVVAVFQEVAAAGAQMIAPMGENEGLQALKLEDVAFKATEQIYGTKGSNPYECLRQSCSVVIATMNKMATAMQEGEYDAEKPQSKSPPPVEQRAAALRAEITDAEGLGLKLEDRETVIKELKKSLKIKGEELSEANVRLSLLEKKLDSASKEADDRVEKIQTKLEETQTVLKKKEKEFEETMDALQADIDQLESEKAELRQRLNNQSKRTIEGLRGVPASGVASIVSGLAGGVSSGQSLINGSGPVQVKDSPLLLQQIDALRLSMKHLKHENNKLKAHQIKTDLSSLPALHVPKLTLPKDRQKEEAMSGTLYRKTSQLLDALQQMSANAKVVDITHKKAGNPAAQLLEQTARLKSLSDTIDKLKNEVMKETVSQCPGANVPTDFATFPSTDFIKAKEEKKEDTVYIGKVTLSCQPGQGQIHKLVLTPEQLHELHERLIC.

Residues 31–73 enclose the CAP-Gly domain; sequence GATLFATGKWVGVILDDSKGKNDGTVQGRRYFTCEENHGIFVR. 2 disordered regions span residues 82–183 and 339–358; these read DGAD…AQVK and SASEKQEHIKVQKQMEKKNT. Over residues 86 to 95 the composition is skewed to low complexity; it reads TTSPETPEPT. Residues 108–117 show a composition bias toward polar residues; sequence PKSSKLPTRP. Positions 118 to 130 are enriched in low complexity; it reads SSSAASSGTASAS. The span at 133–144 shows a compositional bias: polar residues; the sequence is EISSSEPSTPAQ. Over residues 146–163 the composition is skewed to low complexity; it reads PLAAPIIPSPSSAITSPV. 4 coiled-coil regions span residues 170 to 505, 908 to 1005, 1046 to 1071, and 1136 to 1166; these read GPSK…KEQQ, ETVI…RTIE, LLLQQIDALRLSMKHLKHENNKLKAH, and AAQLLEQTARLKSLSDTIDKLKNEVMKETVS. Positions 172–183 are enriched in basic and acidic residues; that stretch reads SKEEENLRAQVK.

Belongs to the dynactin 150 kDa subunit family. In terms of assembly, monomer and homodimer. Subunit of dynactin, a multiprotein complex part of a tripartite complex with dynein and a adapter, such as BICDL1, BICD2 or HOOK3. The dynactin complex is built around ACTR1A/ACTB filament and consists of an actin-related filament composed of a shoulder domain, a pointed end and a barbed end. Its length is defined by its flexible shoulder domain. The soulder is composed of 2 DCTN1 subunits, 4 DCTN2 and 2 DCTN3. DCTN1/p150(glued) binds directly to microtubules and to cytoplasmic dynein.

It localises to the cytoplasm. The protein localises to the cytoskeleton. Its subcellular location is the microtubule organizing center. It is found in the centrosome. The protein resides in the centriole. It localises to the spindle. The protein localises to the cell cortex. Part of the dynactin complex that activates the molecular motor dynein for ultra-processive transport along microtubules. Plays a key role in dynein-mediated retrograde transport of vesicles and organelles along microtubules by recruiting and tethering dynein to microtubules. Binds to both dynein and microtubules providing a link between specific cargos, microtubules and dynein. Essential for targeting dynein to microtubule plus ends, recruiting dynein to membranous cargos and enhancing dynein processivity (the ability to move along a microtubule for a long distance without falling off the track). Can also act as a brake to slow the dynein motor during motility along the microtubule. Can regulate microtubule stability by promoting microtubule formation, nucleation and polymerization and by inhibiting microtubule catastrophe in neurons. Inhibits microtubule catastrophe by binding both to microtubules and to tubulin, leading to enhanced microtubule stability along the axon. Plays a role in metaphase spindle orientation. Plays a role in centriole cohesion and subdistal appendage organization and function. Its recruitment to the centriole in a KIF3A-dependent manner is essential for the maintenance of centriole cohesion and the formation of subdistal appendage. Also required for microtubule anchoring at the mother centriole. Plays a role in primary cilia formation. This chain is Dynactin subunit 1 (dctn1), found in Xenopus laevis (African clawed frog).